Consider the following 115-residue polypeptide: Non-specific lipid-transfer protein 4.1 (115 aa).

Positions 1-25 (MARAAASQLVLVALVAAMLLVAADA) are cleaved as a signal peptide. Intrachain disulfides connect C29–C77, C39–C54, C55–C97, and C75–C111.

It belongs to the plant LTP family.

Functionally, plant non-specific lipid-transfer proteins transfer phospholipids as well as galactolipids across membranes. May play a role in wax or cutin deposition in the cell walls of expanding epidermal cells and certain secretory tissues. This Hordeum vulgare (Barley) protein is Non-specific lipid-transfer protein 4.1 (LTP4.1).